The following is a 208-amino-acid chain: Redox-sensing transcriptional repressor Rex (208 aa).

The H-T-H motif DNA-binding region spans 15-54; the sequence is SYYMCLERLLDEGVEVVSSEELARRLDLKASQIRKDLSYF. 89–94 serves as a coordination point for NAD(+); that stretch reads GAGNIG.

It belongs to the transcriptional regulatory Rex family. As to quaternary structure, homodimer.

It is found in the cytoplasm. Modulates transcription in response to changes in cellular NADH/NAD(+) redox state. In Thermotoga petrophila (strain ATCC BAA-488 / DSM 13995 / JCM 10881 / RKU-1), this protein is Redox-sensing transcriptional repressor Rex.